We begin with the raw amino-acid sequence, 164 residues long: Phosphopantetheine adenylyltransferase (164 aa).

A substrate-binding site is contributed by Ser-9. ATP contacts are provided by residues 9-10 (SF) and His-17. Substrate contacts are provided by Lys-41, Val-78, and Arg-92. Residues 93–95 (GLR), Glu-103, and 128–134 (VRTITAT) contribute to the ATP site.

This sequence belongs to the bacterial CoaD family. As to quaternary structure, homohexamer. It depends on Mg(2+) as a cofactor.

The protein resides in the cytoplasm. The enzyme catalyses (R)-4'-phosphopantetheine + ATP + H(+) = 3'-dephospho-CoA + diphosphate. Its pathway is cofactor biosynthesis; coenzyme A biosynthesis; CoA from (R)-pantothenate: step 4/5. Its function is as follows. Reversibly transfers an adenylyl group from ATP to 4'-phosphopantetheine, yielding dephospho-CoA (dPCoA) and pyrophosphate. The polypeptide is Phosphopantetheine adenylyltransferase (Brucella anthropi (strain ATCC 49188 / DSM 6882 / CCUG 24695 / JCM 21032 / LMG 3331 / NBRC 15819 / NCTC 12168 / Alc 37) (Ochrobactrum anthropi)).